Here is a 282-residue protein sequence, read N- to C-terminus: Undecaprenyl-diphosphatase (282 aa).

The next 7 helical transmembrane spans lie at 40-60 (GAAF…IYFF), 85-105 (AKMG…GLLF), 117-137 (YWIS…EWLI), 158-178 (ALII…RSGV), 193-213 (AARF…IYQL), 231-251 (IVAT…LITF), and 258-278 (AVFI…IATG).

This sequence belongs to the UppP family.

It localises to the cell inner membrane. The enzyme catalyses di-trans,octa-cis-undecaprenyl diphosphate + H2O = di-trans,octa-cis-undecaprenyl phosphate + phosphate + H(+). Catalyzes the dephosphorylation of undecaprenyl diphosphate (UPP). Confers resistance to bacitracin. In Prosthecochloris aestuarii (strain DSM 271 / SK 413), this protein is Undecaprenyl-diphosphatase.